Here is a 179-residue protein sequence, read N- to C-terminus: Cytochrome b6-f complex iron-sulfur subunit (179 aa).

The helical transmembrane segment at 21 to 43 (LLTFGTVTGVALGALYPVVNYFI) threads the bilayer. In terms of domain architecture, Rieske spans 61–162 (GNDIIVSEFL…ANVSDDKLVF (102 aa)). Positions 108, 110, 126, and 129 each coordinate [2Fe-2S] cluster. A disulfide bond links cysteine 113 and cysteine 128.

Belongs to the Rieske iron-sulfur protein family. As to quaternary structure, the 4 large subunits of the cytochrome b6-f complex are cytochrome b6, subunit IV (17 kDa polypeptide, PetD), cytochrome f and the Rieske protein, while the 4 small subunits are PetG, PetL, PetM and PetN. The complex functions as a dimer. [2Fe-2S] cluster is required as a cofactor.

It localises to the cellular thylakoid membrane. It catalyses the reaction 2 oxidized [plastocyanin] + a plastoquinol + 2 H(+)(in) = 2 reduced [plastocyanin] + a plastoquinone + 4 H(+)(out). Functionally, component of the cytochrome b6-f complex, which mediates electron transfer between photosystem II (PSII) and photosystem I (PSI), cyclic electron flow around PSI, and state transitions. The protein is Cytochrome b6-f complex iron-sulfur subunit of Trichodesmium erythraeum (strain IMS101).